The primary structure comprises 402 residues: MTYNQPNNKGFYGQFGGQFVPETLMTAVKQLEEAYVDSKKDPLFQAELKELLKDYVGRENPLYYAKRLTEYAGGAKIYLKREDLNHTGAHKINNALGQVLLAKKMGKNKVIAETGAGQHGVASATAAALFGMECTIYMGEEDVKRQSLNVFRMELLGAKVHSVTDGSRVLKDAVNAALRAWVAQVEDTHYVMGSVLGPHPFPQIVRDYQAVIGQEARAQFLEKENKLPDALVACVGGGSNSMGLFYPFVNDESVAMYGVEAAGLGIDTPHHAATITKGRPGVLHGTLMDVLQDENGQMLEAFSISAGLDYPGIGPEHSYFNAVGRAKYVDITDEEALEGFKILSRTEGIIPALESSHAIAYAVKLAKELGADKSMIVCLSGRGDKDVVQVKERLEAEKEVKK.

The residue at position 91 (Lys-91) is an N6-(pyridoxal phosphate)lysine.

Belongs to the TrpB family. In terms of assembly, tetramer of two alpha and two beta chains. Pyridoxal 5'-phosphate serves as cofactor.

It catalyses the reaction (1S,2R)-1-C-(indol-3-yl)glycerol 3-phosphate + L-serine = D-glyceraldehyde 3-phosphate + L-tryptophan + H2O. It participates in amino-acid biosynthesis; L-tryptophan biosynthesis; L-tryptophan from chorismate: step 5/5. In terms of biological role, the beta subunit is responsible for the synthesis of L-tryptophan from indole and L-serine. This is Tryptophan synthase beta chain (trpB) from Lactococcus lactis subsp. lactis (strain IL1403) (Streptococcus lactis).